The sequence spans 253 residues: REF/SRPP-like protein Os05g0151300/LOC_Os05g05940 (253 aa).

A disordered region spans residues 1 to 26 (MADSGSDAPISNRPEEEVTVEKTPEM). The segment covering 13 to 26 (RPEEEVTVEKTPEM) has biased composition (basic and acidic residues).

The protein belongs to the REF/SRPP family.

This chain is REF/SRPP-like protein Os05g0151300/LOC_Os05g05940, found in Oryza sativa subsp. japonica (Rice).